A 631-amino-acid polypeptide reads, in one-letter code: Phosphomethylpyrimidine synthase (631 aa).

Substrate contacts are provided by residues Asn-239, Met-268, Tyr-297, His-333, 353–355 (SRG), 394–397 (DGLR), and Glu-433. His-437 contributes to the Zn(2+) binding site. Position 460 (Tyr-460) interacts with substrate. Zn(2+) is bound at residue His-501. Residues Cys-581, Cys-584, and Cys-589 each coordinate [4Fe-4S] cluster.

It belongs to the ThiC family. As to quaternary structure, homodimer. The cofactor is [4Fe-4S] cluster.

It catalyses the reaction 5-amino-1-(5-phospho-beta-D-ribosyl)imidazole + S-adenosyl-L-methionine = 4-amino-2-methyl-5-(phosphooxymethyl)pyrimidine + CO + 5'-deoxyadenosine + formate + L-methionine + 3 H(+). The protein operates within cofactor biosynthesis; thiamine diphosphate biosynthesis. In terms of biological role, catalyzes the synthesis of the hydroxymethylpyrimidine phosphate (HMP-P) moiety of thiamine from aminoimidazole ribotide (AIR) in a radical S-adenosyl-L-methionine (SAM)-dependent reaction. In Escherichia coli (strain 55989 / EAEC), this protein is Phosphomethylpyrimidine synthase.